Here is a 245-residue protein sequence, read N- to C-terminus: Eukaryotic translation initiation factor 6 (245 aa).

It belongs to the eIF-6 family. In terms of assembly, monomer. Associates with the 60S ribosomal subunit.

It is found in the cytoplasm. The protein resides in the nucleus. Its subcellular location is the nucleolus. Its function is as follows. Binds to the 60S ribosomal subunit and prevents its association with the 40S ribosomal subunit to form the 80S initiation complex in the cytoplasm. May also be involved in ribosome biogenesis. This Drosophila melanogaster (Fruit fly) protein is Eukaryotic translation initiation factor 6.